The sequence spans 222 residues: Probable pyridoxal 5'-phosphate synthase subunit SNO2 (222 aa).

Position 58-60 (58-60 (GES)) interacts with L-glutamine. The Nucleophile role is filled by Cys-91. Residues Arg-120 and 151 to 152 (IR) each bind L-glutamine. Catalysis depends on charge relay system residues His-197 and Glu-199.

The protein belongs to the glutaminase PdxT/SNO family.

The enzyme catalyses aldehydo-D-ribose 5-phosphate + D-glyceraldehyde 3-phosphate + L-glutamine = pyridoxal 5'-phosphate + L-glutamate + phosphate + 3 H2O + H(+). It catalyses the reaction L-glutamine + H2O = L-glutamate + NH4(+). The protein operates within cofactor biosynthesis; pyridoxal 5'-phosphate biosynthesis. Its function is as follows. Catalyzes the hydrolysis of glutamine to glutamate and ammonia as part of the biosynthesis of pyridoxal 5'-phosphate. The resulting ammonia molecule is channeled to the active site of a SNZ isoform. In Saccharomyces cerevisiae (strain ATCC 204508 / S288c) (Baker's yeast), this protein is Probable pyridoxal 5'-phosphate synthase subunit SNO2 (SNO2).